The following is a 368-amino-acid chain: Transaldolase (368 aa).

Residue Lys140 is the Schiff-base intermediate with substrate of the active site.

Belongs to the transaldolase family. Type 2 subfamily.

It localises to the cytoplasm. The enzyme catalyses D-sedoheptulose 7-phosphate + D-glyceraldehyde 3-phosphate = D-erythrose 4-phosphate + beta-D-fructose 6-phosphate. The protein operates within carbohydrate degradation; pentose phosphate pathway; D-glyceraldehyde 3-phosphate and beta-D-fructose 6-phosphate from D-ribose 5-phosphate and D-xylulose 5-phosphate (non-oxidative stage): step 2/3. Transaldolase is important for the balance of metabolites in the pentose-phosphate pathway. This chain is Transaldolase, found in Kocuria rhizophila (strain ATCC 9341 / DSM 348 / NBRC 103217 / DC2201).